Here is a 360-residue protein sequence, read N- to C-terminus: Zinc finger protein ztf-2 (360 aa).

Positions 19-41 are disordered; that stretch reads LSSPEKEHRRKRRRGEVANPSNT. C2H2-type zinc fingers lie at residues 87 to 109, 115 to 138, and 180 to 203; these read RTCS…KRVH, FKCR…AKTH, and YRCQ…SHLH. Residues 248 to 260 show a composition bias toward low complexity; the sequence is PLSPCRSESSSDS. The tract at residues 248–272 is disordered; the sequence is PLSPCRSESSSDSGIQTDPEEEASI.

In terms of tissue distribution, expressed in pharyngeal epithelium/arcade, which connects the pharynx to the mouth.

Transcription factor. Represses gene expression, probably via binding to DNA consensus sequence 5'-[AT][CT]TTCC[AC][AG]-3' in promoter regions. May play a role in pharynx morphogenesis. This Caenorhabditis elegans protein is Zinc finger protein ztf-2.